We begin with the raw amino-acid sequence, 168 residues long: Small ribosomal subunit protein uS5c (168 aa).

The S5 DRBM domain occupies 17-80 (WQERVVQIRR…SDGKKKIVSV (64 aa)).

The protein belongs to the universal ribosomal protein uS5 family. In terms of assembly, part of the 30S ribosomal subunit. Contacts protein S4.

It is found in the plastid. Its subcellular location is the chloroplast. With S4 and S12 plays an important role in translational accuracy. The chain is Small ribosomal subunit protein uS5c (rps5) from Rhodomonas salina (Cryptomonas salina).